We begin with the raw amino-acid sequence, 47 residues long: Sperm protamine P1 (47 aa).

Belongs to the protamine P1 family. Testis.

Its subcellular location is the nucleus. The protein resides in the chromosome. Its function is as follows. Protamines substitute for histones in the chromatin of sperm during the haploid phase of spermatogenesis. They compact sperm DNA into a highly condensed, stable and inactive complex. The polypeptide is Sperm protamine P1 (PRM1) (Galeopterus variegatus (Malayan flying lemur)).